Reading from the N-terminus, the 314-residue chain is Ribosomal RNA small subunit methyltransferase H (314 aa).

S-adenosyl-L-methionine-binding positions include glycine 40–histidine 42, aspartate 60, phenylalanine 85, aspartate 107, and glutamine 114.

The protein belongs to the methyltransferase superfamily. RsmH family.

The protein localises to the cytoplasm. The enzyme catalyses cytidine(1402) in 16S rRNA + S-adenosyl-L-methionine = N(4)-methylcytidine(1402) in 16S rRNA + S-adenosyl-L-homocysteine + H(+). Specifically methylates the N4 position of cytidine in position 1402 (C1402) of 16S rRNA. The chain is Ribosomal RNA small subunit methyltransferase H from Hydrogenovibrio crunogenus (strain DSM 25203 / XCL-2) (Thiomicrospira crunogena).